The following is a 557-amino-acid chain: Dihydroxy-acid dehydratase (557 aa).

Residue Asp-78 participates in Mg(2+) binding. Cys-119 lines the [2Fe-2S] cluster pocket. Residues Asp-120 and Lys-121 each contribute to the Mg(2+) site. Lys-121 bears the N6-carboxylysine mark. A [2Fe-2S] cluster-binding site is contributed by Cys-192. Glu-442 is a Mg(2+) binding site. The active-site Proton acceptor is Ser-468.

This sequence belongs to the IlvD/Edd family. Homodimer. Requires [2Fe-2S] cluster as cofactor. Mg(2+) is required as a cofactor.

It catalyses the reaction (2R)-2,3-dihydroxy-3-methylbutanoate = 3-methyl-2-oxobutanoate + H2O. The enzyme catalyses (2R,3R)-2,3-dihydroxy-3-methylpentanoate = (S)-3-methyl-2-oxopentanoate + H2O. It functions in the pathway amino-acid biosynthesis; L-isoleucine biosynthesis; L-isoleucine from 2-oxobutanoate: step 3/4. It participates in amino-acid biosynthesis; L-valine biosynthesis; L-valine from pyruvate: step 3/4. Its function is as follows. Functions in the biosynthesis of branched-chain amino acids. Catalyzes the dehydration of (2R,3R)-2,3-dihydroxy-3-methylpentanoate (2,3-dihydroxy-3-methylvalerate) into 2-oxo-3-methylpentanoate (2-oxo-3-methylvalerate) and of (2R)-2,3-dihydroxy-3-methylbutanoate (2,3-dihydroxyisovalerate) into 2-oxo-3-methylbutanoate (2-oxoisovalerate), the penultimate precursor to L-isoleucine and L-valine, respectively. This is Dihydroxy-acid dehydratase from Bacillus cereus (strain ZK / E33L).